A 295-amino-acid chain; its full sequence is Thioredoxin-related transmembrane protein 2 (295 aa).

An N-terminal signal peptide occupies residues 1-48 (MAVLAPLIALVYSVPRLSRWLARPYCLLSALLSIAFLLVRKLPPICNG). Over 49–102 (LPTQREDGNPCDFDWREVEILMFLSAIVMMKNRRSITVEQHVGNIFMFSKVANA) the chain is Extracellular. A helical transmembrane segment spans residues 103 to 125 (ILFFRLDIRMGLLYLTLCIVFLM). A Thioredoxin domain is found at 114–269 (LLYLTLCIVF…LYQRAKKHSK (156 aa)). The Cytoplasmic segment spans residues 126 to 295 (TCKPPLYMGP…VPDGENKKDK (170 aa)). A phosphoserine mark is found at Ser211 and Ser243. Residues 266-295 (KHSKGGDMSEEKPVDPAPTTVPDGENKKDK) are disordered. The segment covering 269 to 279 (KGGDMSEEKPV) has biased composition (basic and acidic residues). The Di-lysine motif motif lies at 292–295 (KKDK).

Monomer. Homodimer; disulfide-linked. Occurs in both reduced and oxidized monomeric form. Oxidative conditions increase homodimerization. Interacts with CANX. Interacts with ATP2A2.

It localises to the endoplasmic reticulum membrane. The protein localises to the mitochondrion membrane. Endoplasmic reticulum and mitochondria-associated protein that probably functions as a regulator of cellular redox state and thereby regulates protein post-translational modification, protein folding and mitochondrial activity. Indirectly regulates neuronal proliferation, migration, and organization in the developing brain. The polypeptide is Thioredoxin-related transmembrane protein 2 (Tmx2) (Mus musculus (Mouse)).